Reading from the N-terminus, the 126-residue chain is UPF0102 protein HD_0802 (126 aa).

The protein belongs to the UPF0102 family.

In Haemophilus ducreyi (strain 35000HP / ATCC 700724), this protein is UPF0102 protein HD_0802.